Consider the following 192-residue polypeptide: Erythropoietin (192 aa).

A signal peptide spans 1 to 27; it reads MGVHECPAWLWLLLSLVSLPLGLPVPG. 2 disulfides stabilise this stretch: Cys34-Cys187 and Cys56-Cys60. The N-linked (GlcNAc...) asparagine glycan is linked to Asn51. 2 N-linked (GlcNAc...) asparagine glycosylation sites follow: Asn65 and Asn110. A glycan (O-linked (GalNAc...) serine) is linked at Ser152.

This sequence belongs to the EPO/TPO family. Produced by kidney or liver of adult mammals and by liver of fetal or neonatal mammals.

It is found in the secreted. Hormone involved in the regulation of erythrocyte proliferation and differentiation and the maintenance of a physiological level of circulating erythrocyte mass. Binds to EPOR leading to EPOR dimerization and JAK2 activation thereby activating specific downstream effectors, including STAT1 and STAT3. The polypeptide is Erythropoietin (EPO) (Macaca mulatta (Rhesus macaque)).